A 379-amino-acid polypeptide reads, in one-letter code: Chaperone protein DnaJ (379 aa).

A J domain is found at 5–70 (DYYEVLGVSR…QKRAAYDQYG (66 aa)). A CR-type zinc finger spans residues 134–212 (GVTKEIRIPT…CHGHGRVEKS (79 aa)). Zn(2+)-binding residues include C147, C150, C164, C167, C186, C189, C200, and C203. 4 CXXCXGXG motif repeats span residues 147–154 (CDVCHGSG), 164–171 (CPTCHGAG), 186–193 (CPHCHGRG), and 200–207 (CNKCHGHG).

Belongs to the DnaJ family. In terms of assembly, homodimer. It depends on Zn(2+) as a cofactor.

Its subcellular location is the cytoplasm. Its function is as follows. Participates actively in the response to hyperosmotic and heat shock by preventing the aggregation of stress-denatured proteins and by disaggregating proteins, also in an autonomous, DnaK-independent fashion. Unfolded proteins bind initially to DnaJ; upon interaction with the DnaJ-bound protein, DnaK hydrolyzes its bound ATP, resulting in the formation of a stable complex. GrpE releases ADP from DnaK; ATP binding to DnaK triggers the release of the substrate protein, thus completing the reaction cycle. Several rounds of ATP-dependent interactions between DnaJ, DnaK and GrpE are required for fully efficient folding. Also involved, together with DnaK and GrpE, in the DNA replication of plasmids through activation of initiation proteins. The protein is Chaperone protein DnaJ of Yersinia pestis bv. Antiqua (strain Antiqua).